Reading from the N-terminus, the 968-residue chain is Glycine dehydrogenase (decarboxylating) (968 aa).

The residue at position 712 (Lys712) is an N6-(pyridoxal phosphate)lysine.

It belongs to the GcvP family. As to quaternary structure, the glycine cleavage system is composed of four proteins: P, T, L and H. Pyridoxal 5'-phosphate serves as cofactor.

It catalyses the reaction N(6)-[(R)-lipoyl]-L-lysyl-[glycine-cleavage complex H protein] + glycine + H(+) = N(6)-[(R)-S(8)-aminomethyldihydrolipoyl]-L-lysyl-[glycine-cleavage complex H protein] + CO2. Functionally, the glycine cleavage system catalyzes the degradation of glycine. The P protein binds the alpha-amino group of glycine through its pyridoxal phosphate cofactor; CO(2) is released and the remaining methylamine moiety is then transferred to the lipoamide cofactor of the H protein. The protein is Glycine dehydrogenase (decarboxylating) of Prochlorococcus marinus (strain NATL2A).